The primary structure comprises 263 residues: Small ribosomal subunit protein eS4 (263 aa).

The S4 RNA-binding domain maps to 42-104 (LPLIIFLRNR…TGENFRLIYD (63 aa)).

The protein belongs to the eukaryotic ribosomal protein eS4 family.

The chain is Small ribosomal subunit protein eS4 (RPS4) from Bos taurus (Bovine).